Reading from the N-terminus, the 471-residue chain is Cysteine--tRNA ligase (471 aa).

A Zn(2+)-binding site is contributed by Cys29. Positions 31–41 (LTVQSEPHVGH) match the 'HIGH' region motif. Cys215, His240, and Glu244 together coordinate Zn(2+). The short motif at 271-275 (KMSKS) is the 'KMSKS' region element. Lys274 is an ATP binding site.

Belongs to the class-I aminoacyl-tRNA synthetase family. In terms of assembly, monomer. It depends on Zn(2+) as a cofactor.

Its subcellular location is the cytoplasm. It carries out the reaction tRNA(Cys) + L-cysteine + ATP = L-cysteinyl-tRNA(Cys) + AMP + diphosphate. The sequence is that of Cysteine--tRNA ligase from Nocardioides sp. (strain ATCC BAA-499 / JS614).